The chain runs to 148 residues: NADPH-dependent 7-cyano-7-deazaguanine reductase (148 aa).

Catalysis depends on cysteine 50, which acts as the Thioimide intermediate. The Proton donor role is filled by aspartate 57. Substrate-binding positions include 72 to 74 (VES) and 91 to 92 (HE).

This sequence belongs to the GTP cyclohydrolase I family. QueF type 1 subfamily.

It localises to the cytoplasm. It catalyses the reaction 7-aminomethyl-7-carbaguanine + 2 NADP(+) = 7-cyano-7-deazaguanine + 2 NADPH + 3 H(+). It functions in the pathway tRNA modification; tRNA-queuosine biosynthesis. Functionally, catalyzes the NADPH-dependent reduction of 7-cyano-7-deazaguanine (preQ0) to 7-aminomethyl-7-deazaguanine (preQ1). The sequence is that of NADPH-dependent 7-cyano-7-deazaguanine reductase from Helicobacter pylori (strain HPAG1).